The following is a 196-amino-acid chain: uncharacterized protein (196 aa).

A signal peptide spans 1–27 (MSVLSRAVQLAFVALGLCLFFSNLVAA).

The protein localises to the secreted. This is an uncharacterized protein from Arthroderma benhamiae (strain ATCC MYA-4681 / CBS 112371) (Trichophyton mentagrophytes).